The primary structure comprises 123 residues: Small ribosomal subunit protein uS12 (123 aa).

The disordered stretch occupies residues 1–26; the sequence is MPTLNQLVRKPRKRPVAKSKVPALDA. The residue at position 89 (Asp89) is a 3-methylthioaspartic acid. The tract at residues 104–123 is disordered; it reads TAGVKNRKQSRSKYGAKRPK. Residues 108–123 show a composition bias toward basic residues; it reads KNRKQSRSKYGAKRPK.

It belongs to the universal ribosomal protein uS12 family. As to quaternary structure, part of the 30S ribosomal subunit. Contacts proteins S8 and S17. May interact with IF1 in the 30S initiation complex.

Functionally, with S4 and S5 plays an important role in translational accuracy. Its function is as follows. Interacts with and stabilizes bases of the 16S rRNA that are involved in tRNA selection in the A site and with the mRNA backbone. Located at the interface of the 30S and 50S subunits, it traverses the body of the 30S subunit contacting proteins on the other side and probably holding the rRNA structure together. The combined cluster of proteins S8, S12 and S17 appears to hold together the shoulder and platform of the 30S subunit. The protein is Small ribosomal subunit protein uS12 of Acidithiobacillus ferrooxidans (strain ATCC 23270 / DSM 14882 / CIP 104768 / NCIMB 8455) (Ferrobacillus ferrooxidans (strain ATCC 23270)).